The sequence spans 839 residues: Genome polyprotein (839 aa).

The span at 55–66 (TAEVGSHQSEPL) shows a compositional bias: polar residues. The segment at 55 to 76 (TAEVGSHQSEPLKTSVDKPGSK) is disordered. 2 short sequence motifs ((L)YPX(n)L motif) span residues 167 to 171 (YPHGL) and 200 to 205 (YPVWEL). Over residues 496 to 510 (SGGFSTTVSTEQNVP) the composition is skewed to polar residues. Disordered stretches follow at residues 496–530 (SGGF…NKGK) and 773–792 (GDLE…RFES). The tract at residues 766–836 (MLDRIAGGDL…RKLKGLFSQS (71 aa)) is involved in P1-2A pentamerization. A compositionally biased stretch (basic and acidic residues) spans 780–792 (DDPRTDEDRRFES).

This sequence belongs to the picornaviridae polyprotein family. As to quaternary structure, homodimer. Homomultimer; probably interacts with membranes in a multimeric form. Seems to assemble into amyloid-like fibers. Homopentamer. Homooligomer. In terms of assembly, interacts with capsid protein VP2. Interacts with capsid protein VP3. As to quaternary structure, interacts with capsid protein VP1. Interacts with capsid protein VP3. Interacts with capsid protein VP1. Interacts with capsid protein VP2. In terms of processing, specific enzymatic cleavages by viral protease in vivo yield a variety of precursors and mature proteins. Polyprotein processing intermediates are produced, such as P1-2A which is a functional precursor of the structural proteins, VP0 which is a VP4-VP2 precursor, VP1-2A precursor, 3ABC precursor which is a stable and catalytically active precursor of 3A, 3B and 3C proteins, 3AB and 3CD precursors. The assembly signal 2A is removed from VP1-2A by a host protease, possibly host Cathepsin L. This cleavage occurs over a region of 3 amino-acids probably generating VP1 proteins with heterogeneous C-termini. During virion maturation, immature virions are rendered infectious following cleavage of VP0 into VP4 and VP2. This maturation seems to be an autocatalytic event triggered by the presence of RNA in the capsid and is followed by a conformational change of the particle. Post-translationally, the assembly signal 2A is removed from VP1-2A by a host protease, possibly host Cathepsin L in naked virions. This cleavage does not occur in enveloped virions. This cleavage occurs over a region of 3 amino-acids probably generating VP1 proteins with heterogeneous C-termini. In terms of processing, unlike other picornaviruses, does not seem to be myristoylated.

It localises to the virion. It is found in the host endosome. The protein localises to the host multivesicular body. Its subcellular location is the host membrane. Functionally, capsid proteins VP1, VP2, and VP3 form a closed capsid enclosing the viral positive strand RNA genome. All these proteins contain a beta-sheet structure called beta-barrel jelly roll. Together they form an icosahedral capsid (T=3) composed of 60 copies of each VP1, VP2, and VP3, with a diameter of approximately 300 Angstroms. VP1 is situated at the 12 fivefold axes, whereas VP2 and VP3 are located at the quasi-sixfold axes. The naked capsid interacts with the host receptor HAVCR1 to provide virion attachment to and probably entry into the target cell. Its function is as follows. VP0 precursor is a component of the immature procapsids. Plays a role in the assembly of the 12 pentamers into an icosahedral structure. Has not been detected in mature virions, supposedly owing to its small size. In terms of biological role, precursor component of immature procapsids that corresponds to an extended form of the structural protein VP1. After maturation, possibly by the host Cathepsin L, the assembly signal 2A is cleaved to give rise to the mature VP1 protein. Functionally, affects membrane integrity and causes an increase in membrane permeability. Its function is as follows. Functions as a viroporin. Affects membrane integrity and causes an increase in membrane permeability. Involved in host intracellular membrane rearrangements probably to give rise to the viral factories. Does not disrupt calcium homeostasis or glycoprotein trafficking. Antagonizes the innate immune response of the host by suppressing IFN-beta synthesis, which it achieves by interfering with the RIG-I/IFIH1 pathway. The protein is Genome polyprotein of Callithrix (Owl-faced monkey).